The chain runs to 182 residues: uncharacterized protein (182 aa).

A compositionally biased stretch (polar residues) spans 1 to 23 (MILSDQNFLQTQWKEPQTAQSKN). The segment at 1–33 (MILSDQNFLQTQWKEPQTAQSKNTESKCEFHGN) is disordered.

It belongs to the peptidase M24 family.

This is an uncharacterized protein from Caenorhabditis elegans.